An 84-amino-acid polypeptide reads, in one-letter code: Exodeoxyribonuclease 7 small subunit (84 aa).

This sequence belongs to the XseB family. As to quaternary structure, heterooligomer composed of large and small subunits.

The protein localises to the cytoplasm. The catalysed reaction is Exonucleolytic cleavage in either 5'- to 3'- or 3'- to 5'-direction to yield nucleoside 5'-phosphates.. Its function is as follows. Bidirectionally degrades single-stranded DNA into large acid-insoluble oligonucleotides, which are then degraded further into small acid-soluble oligonucleotides. The chain is Exodeoxyribonuclease 7 small subunit from Yersinia pseudotuberculosis serotype O:1b (strain IP 31758).